The primary structure comprises 59 residues: Transcription elongation factor Spt4 (59 aa).

Zn(2+) is bound by residues cysteine 4, cysteine 7, cysteine 16, and cysteine 19.

Belongs to the archaeal Spt4 family. Heterodimer composed of Spt4 and Spt5.

Its function is as follows. Stimulates transcription elongation. This Methanocaldococcus jannaschii (strain ATCC 43067 / DSM 2661 / JAL-1 / JCM 10045 / NBRC 100440) (Methanococcus jannaschii) protein is Transcription elongation factor Spt4.